The following is a 374-amino-acid chain: Putative zinc finger MYND domain-containing protein R331 (374 aa).

Residues C328, C331, C341, C344, C350, C354, H362, and C366 each coordinate Zn(2+). Residues 328 to 366 (CFYCNKNIEKPVVCNKCFRIKYCSEKCQSEYNSYHSDDC) form an MYND-type zinc finger.

The polypeptide is Putative zinc finger MYND domain-containing protein R331 (Acanthamoeba polyphaga (Amoeba)).